The chain runs to 488 residues: SAGA complex subunit HFI1 (488 aa).

2 disordered regions span residues 1–58 (MSAI…QGPN) and 352–383 (QLDDDKNEDECADEAKSINNGNNSSKDDIGDI). The segment covering 37 to 58 (AVSNHTEPNNGNNETAEPQGPN) has biased composition (polar residues).

As to quaternary structure, component of the 1.8 MDa SAGA (Spt-Ada-Gcn5 acetyltransferase) complex, which is composed of 19 subunits TRA1, SPT7, TAF5, NGG1/ADA3, SGF73, SPT20/ADA5, SPT8, TAF12, TAF6, HFI1/ADA1, UBP8, GCN5, ADA2, SPT3, SGF29, TAF10, TAF9, SGF11 and SUS1. The SAGA complex is composed of 4 modules, namely the HAT (histone acetyltransferase) module (GCN5, ADA2, NGG1/ADA3 and SGF29), the DUB (deubiquitinating) module (UBP8, SGF11, SGF73 and SUS1), the core or TAF (TBP-associated factor) module (TAF5, TAF6, TAF9, TAF10 and TAF12), and the Tra1 or SPT (Suppressor of Ty) module (TRA1, HFI1/ADA1, SPT3, SPT7, SPT8 and SPT20/ADA5). The Tra1/SPT module binds activators, the core module recruits TBP (TATA-binding protein), the HAT module contains the histone H3 acetyltransferase GCN5, and the DUB module comprises the histone H2B deubiquitinase UBP8. Also identified in an altered form of SAGA, named SALSA (SAGA altered, Spt8 absent) or SLIK (SAGA-like) complex, which contains a C-terminal truncated form of SPT7 and is missing SPT8. However, it has been shown that the SAGA and SAGA-like SALSA/SLIK transcriptional coactivators are structurally and biochemically equivalent. Component of an ADA/GCN5 complex that consists of HFI1/ADA1, ADA2, NGG1/ADA3, SPT20/ADA5 and GCN5 and probably is a subcomplex of SAGA.

The protein resides in the nucleus. Component of the transcription coactivator SAGA complex. SAGA acts as a general cofactor required for essentially all RNA polymerase II transcription. At the promoters, SAGA is required for transcription pre-initiation complex (PIC) recruitment. It influences RNA polymerase II transcriptional activity through different activities such as TBP interaction (via core/TAF module) and promoter selectivity, interaction with transcription activators (via Tra1/SPT module), and chromatin modification through histone acetylation (via HAT module) and deubiquitination (via DUB module). SAGA preferentially acetylates histones H3 (to form H3K9ac, H3K14ac, H3K18ac and H3K23ac) and H2B and deubiquitinates histone H2B. SAGA interacts with DNA via upstream activating sequences (UASs). Also identified in a modified version of SAGA named SALSA or SLIK. The cleavage of SPT7 and the absence of the SPT8 subunit in SLIK neither drive any major conformational differences in its structure compared with SAGA, nor significantly affect HAT, DUB, or DNA-binding activities. The sequence is that of SAGA complex subunit HFI1 (HFI1) from Saccharomyces cerevisiae (strain ATCC 204508 / S288c) (Baker's yeast).